Here is a 459-residue protein sequence, read N- to C-terminus: Vasoactive intestinal polypeptide receptor 1 (459 aa).

A signal peptide spans 1-30; that stretch reads MRPPSLPPARWLCVLAGALACALGPAGSRA. Topologically, residues 31–142 are extracellular; it reads ASPHQECEYL…EQQQTEFYDA (112 aa). Disulfide bonds link Cys37-Cys209, Cys50-Cys72, Cys63-Cys105, Cys86-Cys122, and Cys216-Cys286. 4 N-linked (GlcNAc...) asparagine glycosylation sites follow: Asn58, Asn69, Asn100, and Asn104. The helical transmembrane segment at 143–167 threads the bilayer; it reads VKTGYTIGYSLSLASLLVAMAILSL. Topologically, residues 168 to 175 are cytoplasmic; it reads FRKLHCTR. A helical transmembrane segment spans residues 176–197; that stretch reads NYIHMHLFMSFILRATAVFIKD. The Extracellular portion of the chain corresponds to 198 to 217; that stretch reads MALFNNGETDHCSEASVSCK. Residues 218 to 242 traverse the membrane as a helical segment; the sequence is AAVVFFQYCVMANFFWLLVEGLYLH. At 243 to 255 the chain is on the cytoplasmic side; it reads TLLAVSFFSERKY. A helical transmembrane segment spans residues 256 to 277; the sequence is FWGYILIGWGVPSVFIMIWTIV. The Extracellular portion of the chain corresponds to 278 to 293; it reads RIHFEDFGCWDTIINS. Asn292 carries N-linked (GlcNAc...) asparagine glycosylation. Residues 294–318 form a helical membrane-spanning segment; sequence SLWWIIKGPILISILVNFILFICII. The Cytoplasmic portion of the chain corresponds to 319 to 340; that stretch reads RILVQKLRPPDIGKNDSSPYSR. A helical membrane pass occupies residues 341-361; it reads LAKSTLLLIPLFGVHYVMFAF. Residues 362–369 are Extracellular-facing; that stretch reads FPDNFKAQ. Residues 370-393 traverse the membrane as a helical segment; it reads VKMVFELVVGSFQGFVVAILYCFL. The Cytoplasmic portion of the chain corresponds to 394–459; sequence NGEVQAELRR…SSFQAEVSLV (66 aa).

Belongs to the G-protein coupled receptor 2 family. As to quaternary structure, interacts with ADCYAP1/PACAP; activated by both PACAP27 and PACAP38 neuropeptides. Interacts with VIP; the interaction results in VIPR1 activation.

The protein localises to the cell membrane. Functionally, g protein-coupled receptor activated by the neuropeptides vasoactive intestinal peptide (VIP) and pituitary adenylate cyclase-activating polypeptide (ADCYAP1/PACAP). Binds VIP and both PACAP27 and PACAP38 bioactive peptides with the following order of ligand affinity VIP = PACAP27 &gt; PACAP38. Ligand binding causes a conformation change that triggers signaling via guanine nucleotide-binding proteins (G proteins) and modulates the activity of downstream effectors. Activates cAMP-dependent pathway. The polypeptide is Vasoactive intestinal polypeptide receptor 1 (Mus musculus (Mouse)).